Reading from the N-terminus, the 131-residue chain is Small ribosomal subunit protein bS18 (131 aa).

Residues 1–10 (MSNGTDSKTA) show a composition bias toward polar residues. Residues 1 to 60 (MSNGTDSKTASAPPARSGGGFGGGGSRGGDRGDRGDRGGDRGDRGGGLGGDDDKRGGGRG) are disordered. Residues 17–27 (SGGGFGGGGSR) show a composition bias toward gly residues. Positions 28-44 (GGDRGDRGDRGGDRGDR) are enriched in basic and acidic residues.

The protein belongs to the bacterial ribosomal protein bS18 family. As to quaternary structure, part of the 30S ribosomal subunit. Forms a tight heterodimer with protein bS6.

Functionally, binds as a heterodimer with protein bS6 to the central domain of the 16S rRNA, where it helps stabilize the platform of the 30S subunit. This chain is Small ribosomal subunit protein bS18, found in Myxococcus xanthus (strain DK1622).